The primary structure comprises 417 residues: Alpha-ionylideneethane synthase aba3 (417 aa).

This sequence belongs to the alpha-ionylideneethane synthase family.

It participates in hormone biosynthesis. Alpha-ionylideneethane synthase; part of the gene cluster that mediates the biosynthesis of abscisic acid (ABA), a phytohormone that acts antagonistically toward salicylic acid (SA), jasmonic acid (JA) and ethylene (ETH) signaling, to impede plant defense responses. The first step of the pathway catalyzes the reaction from farnesyl diphosphate to alpha-ionylideneethane performed by the alpha-ionylideneethane synthase aba3 via a three-step reaction mechanism involving 2 neutral intermediates, beta-farnesene and allofarnesene. The cytochrome P450 monooxygenase aba1 might then be involved in the conversion of alpha-ionylideneethane to alpha-ionylideneacetic acid. Alpha-ionylideneacetic acid is further converted to abscisic acid in 2 steps involving the cytochrome P450 monooxygenase aba2 and the short-chain dehydrogenase/reductase aba4, via the intermediates 1'-deoxy-ABA or 1',4'-trans-diol-ABA, depending on the order of action of these 2 enzymes. Aba2 is responsible for the hydroxylation of carbon atom C-1' and aba4 might be involved in the oxidation of the C-4' carbon atom. In Botryotinia fuckeliana (Noble rot fungus), this protein is Alpha-ionylideneethane synthase aba3.